Reading from the N-terminus, the 533-residue chain is uncharacterized protein (533 aa).

The interval 1-26 (MKRFFSKLFSKSPTSGRVPSPDSDYS) is disordered. A phosphoserine mark is found at Ser20 and Ser23. Position 25 is a phosphotyrosine (Tyr25). At Ser26 the chain carries Phosphoserine. 10 helical membrane-spanning segments follow: residues 178–198 (ILAVLHIPVALIWLNLEHILI), 213–230 (YMRVFILAAPGYAVFEAL), 242–264 (PITYVLCFAAPLNILLNYLLVWH), 274–296 (APVAVATTFWFQSICLILYICFS), 313–333 (LSPMLHFSFHGMLMIVTEWAA), 353–373 (SILLTSTSLLFQIPFAFAVAS), 394–414 (RVAYSLALCISIFDGSLIFCF), 435–455 (IFPILSLFIVTDGLNAVGGGL), 466–486 (GLISIGSSYLFALPVTVFVVV), and 495–515 (IWCGMILSSVTAITCQFTVLF).

It belongs to the multi antimicrobial extrusion (MATE) (TC 2.A.66.1) family.

The protein localises to the vacuole membrane. This is an uncharacterized protein from Schizosaccharomyces pombe (strain 972 / ATCC 24843) (Fission yeast).